Consider the following 358-residue polypeptide: Putative KilA-N domain-containing protein 313L (358 aa).

The KilA-N domain maps to asparagine 15–phenylalanine 124. Residues valine 126–arginine 245 are a coiled coil.

The protein belongs to the IIV-6 006L/238R/313L/468L family.

The chain is Putative KilA-N domain-containing protein 313L from Acheta domesticus (House cricket).